We begin with the raw amino-acid sequence, 246 residues long: Transcription factor A, mitochondrial (246 aa).

The transit peptide at M1–F42 directs the protein to the mitochondrion. The segment at residues P50–K118 is a DNA-binding region (HMG box 1). Phosphoserine; by PKA occurs at positions 55, 56, and 61. T122 bears the Phosphothreonine mark. Residues P155 to E219 constitute a DNA-binding region (HMG box 2). S160 is modified (phosphoserine; by PKA). Phosphoserine occurs at positions 193 and 195.

As to quaternary structure, monomer; binds DNA as a monomer. Homodimer. Component of the mitochondrial transcription initiation complex, composed at least of TFB2M, TFAM and POLRMT. In this complex TFAM recruits POLRMT to the promoter whereas TFB2M induces structural changes in POLRMT to enable promoter opening and trapping of the DNA non-template strand. Upon metabolic stress, forms a complex composed of FOXO3, SIRT3, TFAM and POLRMT. Interacts with TFB1M and TFB2M. Interacts with CLPX; this enhances DNA-binding. Post-translationally, phosphorylation by PKA within the HMG box 1 impairs DNA binding and promotes degradation by the AAA+ Lon protease.

Its subcellular location is the mitochondrion. The protein resides in the mitochondrion matrix. The protein localises to the mitochondrion nucleoid. Binds to the mitochondrial light strand promoter and functions in mitochondrial transcription regulation. Component of the mitochondrial transcription initiation complex, composed at least of TFB2M, TFAM and POLRMT that is required for basal transcription of mitochondrial DNA. In this complex, TFAM recruits POLRMT to a specific promoter whereas TFB2M induces structural changes in POLRMT to enable promoter opening and trapping of the DNA non-template strand. Required for accurate and efficient promoter recognition by the mitochondrial RNA polymerase. Promotes transcription initiation from the HSP1 and the light strand promoter by binding immediately upstream of transcriptional start sites. Is able to unwind DNA. Bends the mitochondrial light strand promoter DNA into a U-turn shape via its HMG boxes. Required for maintenance of normal levels of mitochondrial DNA. May play a role in organizing and compacting mitochondrial DNA. The protein is Transcription factor A, mitochondrial of Trachypithecus cristatus (Silvered leaf-monkey).